The following is a 436-amino-acid chain: NADH-quinone oxidoreductase subunit D 1 (436 aa).

Belongs to the complex I 49 kDa subunit family. In terms of assembly, NDH-1 is composed of 14 different subunits. Subunits NuoB, C, D, E, F, and G constitute the peripheral sector of the complex.

Its subcellular location is the cell inner membrane. It carries out the reaction a quinone + NADH + 5 H(+)(in) = a quinol + NAD(+) + 4 H(+)(out). Its function is as follows. NDH-1 shuttles electrons from NADH, via FMN and iron-sulfur (Fe-S) centers, to quinones in the respiratory chain. The immediate electron acceptor for the enzyme in this species is believed to be ubiquinone. Couples the redox reaction to proton translocation (for every two electrons transferred, four hydrogen ions are translocated across the cytoplasmic membrane), and thus conserves the redox energy in a proton gradient. The sequence is that of NADH-quinone oxidoreductase subunit D 1 from Stenotrophomonas maltophilia (strain R551-3).